The chain runs to 38 residues: DVNELNDVEERRAVVPQVWEIDIMITKHNDEIIQIEER.

As to quaternary structure, homodimer. Post-translationally, O-glycosylated. Contains sialic acid residues. Found in the whey fraction of milk (at protein level).

It is found in the secreted. The protein is Very early lactation protein of Trichosurus vulpecula (Brush-tailed possum).